The primary structure comprises 377 residues: 3-dehydroquinate synthase (377 aa).

Residues 115-119 (GVIGD), 139-140 (TS), K152, and K161 contribute to the NAD(+) site. Residues E194, H256, and H275 each contribute to the Zn(2+) site.

The protein belongs to the sugar phosphate cyclases superfamily. Dehydroquinate synthase family. The cofactor is Co(2+). It depends on Zn(2+) as a cofactor. NAD(+) serves as cofactor.

Its subcellular location is the cytoplasm. It carries out the reaction 7-phospho-2-dehydro-3-deoxy-D-arabino-heptonate = 3-dehydroquinate + phosphate. Its pathway is metabolic intermediate biosynthesis; chorismate biosynthesis; chorismate from D-erythrose 4-phosphate and phosphoenolpyruvate: step 2/7. In terms of biological role, catalyzes the conversion of 3-deoxy-D-arabino-heptulosonate 7-phosphate (DAHP) to dehydroquinate (DHQ). The chain is 3-dehydroquinate synthase from Rhizobium rhizogenes (strain K84 / ATCC BAA-868) (Agrobacterium radiobacter).